The chain runs to 229 residues: Large ribosomal subunit protein uL1 (229 aa).

It belongs to the universal ribosomal protein uL1 family. Part of the 50S ribosomal subunit.

In terms of biological role, binds directly to 23S rRNA. The L1 stalk is quite mobile in the ribosome, and is involved in E site tRNA release. Its function is as follows. Protein L1 is also a translational repressor protein, it controls the translation of the L11 operon by binding to its mRNA. In Staphylococcus aureus (strain MRSA252), this protein is Large ribosomal subunit protein uL1.